The chain runs to 854 residues: V-type proton ATPase 116 kDa subunit a 2 (854 aa).

Residues M1 to E393 are Cytoplasmic-facing. The helical transmembrane segment at V394 to F412 threads the bilayer. Over G413–D414 the chain is Vacuolar. A helical membrane pass occupies residues F415–N431. Residues E432–R445 are Cytoplasmic-facing. A helical transmembrane segment spans residues M446–S475. The Vacuolar segment spans residues V476 to S549. Residues F550–L569 form a helical membrane-spanning segment. At G570–S587 the chain is on the cytoplasmic side. Residues I588–K608 traverse the membrane as a helical segment. The Vacuolar portion of the chain corresponds to W609–L651. Residues L652 to L671 traverse the membrane as a helical segment. Residues L672–S739 lie on the Cytoplasmic side of the membrane. 2 positions are modified to phosphoserine: S695 and S700. A helical membrane pass occupies residues I740 to A764. Residues Q765–Y785 are Vacuolar-facing. Residues G786–E824 form a helical membrane-spanning segment. At F825 to A854 the chain is on the cytoplasmic side.

It belongs to the V-ATPase 116 kDa subunit family. V-ATPase is a heteromultimeric enzyme made up of two complexes: the ATP-hydrolytic V1 complex and the proton translocation V0 complex. The V1 complex consists of three catalytic AB heterodimers that form a heterohexamer, three peripheral stalks each consisting of EG heterodimers, one central rotor including subunits D and F, and the regulatory subunits C and H. The proton translocation complex V0 consists of the proton transport subunit a, a ring of proteolipid subunits c9c'', rotary subunit d, subunits e and f, and the accessory subunits ATP6AP1/Ac45 and ATP6AP2/PRR. Directly interacts with PSCD2 through its N-terminal cytosolic tail in an intra-endosomal acidification-dependent manner. Disruption of this interaction results in the inhibition of endocytosis. Interacts with SPAAR. Highly expressed in lung, kidney and spleen.

The protein localises to the cell membrane. The protein resides in the endosome membrane. Its function is as follows. Subunit of the V0 complex of vacuolar(H+)-ATPase (V-ATPase), a multisubunit enzyme composed of a peripheral complex (V1) that hydrolyzes ATP and a membrane integral complex (V0) that translocates protons. V-ATPase is responsible for acidifying and maintaining the pH of intracellular compartments and in some cell types, is targeted to the plasma membrane, where it is responsible for acidifying the extracellular environment. Essential component of the endosomal pH-sensing machinery. May play a role in maintaining the Golgi functions, such as glycosylation maturation, by controlling the Golgi pH. In aerobic conditions, involved in intracellular iron homeostasis, thus triggering the activity of Fe(2+) prolyl hydroxylase (PHD) enzymes, and leading to HIF1A hydroxylation and subsequent proteasomal degradation. The chain is V-type proton ATPase 116 kDa subunit a 2 (ATP6V0A2) from Bos taurus (Bovine).